A 346-amino-acid polypeptide reads, in one-letter code: Ribulose-5-phosphate reductase (346 aa).

Zn(2+) is bound by residues Cys45, His71, Glu72, and Glu151.

The protein belongs to the zinc-containing alcohol dehydrogenase family. Zn(2+) is required as a cofactor.

The enzyme catalyses D-ribitol 5-phosphate + NADP(+) = D-ribulose 5-phosphate + NADPH + H(+). The protein operates within cell wall biogenesis; poly(ribitol phosphate) teichoic acid biosynthesis. Its function is as follows. Catalyzes the NADPH dependent reduction of D-ribulose 5-phosphate to D-ribitol 5-phosphate. The sequence is that of Ribulose-5-phosphate reductase from Streptococcus pneumoniae (strain ATCC BAA-255 / R6).